The following is a 61-amino-acid chain: [Thr6]-bradykinyl-Val,Asp (61 aa).

A signal peptide spans 1-22 (MSFLKKSLFLVLFLGFVSFSIC). Positions 23–50 (EEEKREDEEEENEREENKESEEKRNQEE) are excised as a propeptide. The interval 24 to 61 (EEKREDEEEENEREENKESEEKRNQEERPPGFTPFRVD) is disordered. Residues 26 to 36 (KREDEEEENER) show a composition bias toward acidic residues. Positions 37–52 (EENKESEEKRNQEERP) are enriched in basic and acidic residues. Pro-53 bears the 4-hydroxyproline; in form [Hyp3,Thr6]-bradykinyl-Val,Asp and [Hyp3,Thr6]-bradykinin mark.

The protein belongs to the frog skin active peptide (FSAP) family. Bradykinin-related peptide subfamily. Expressed by the skin glands.

The protein resides in the secreted. Induces relaxation of rat smooth muscle from tail artery (EC(50)=16.8 nM) and contraction of that from ileum (EC(50)=205 nM), urinary bladder (EC(50)=895 nM) and uterus (EC(50)=60.3 nM). Binds to both bradykinin receptor B1 (BDKRB1) and B2 (BDKRB2). Its function is as follows. [Hyp3,Thr6]-bradykinin: Induces relaxation of rat smooth muscle from tail artery (EC(50)=56.7 nM) and contraction of that from ileum (EC(50)=588 nM), urinary bladder (EC(50)=4.6 uM) and uterus (EC(50)=3.9 nM). Binds to both bradykinin receptor B1 (BDKRB1) and B2 (BDKRB2). In arterial smooth muscle, the effect via BDKRB1 is stronger, in uterus, ileum and urinary bladder the effect via BDKRB2. In terms of biological role, induces relaxation of rat smooth muscle from tail artery (EC(50)=10.8 nM) and contraction of that from ileum (EC(50)=645 nM), urinary bladder (EC(50)=1.1 uM) and uterus (EC(50)=1.2 uM). Binds to both bradykinin receptor B1 (BDKRB1) and B2 (BDKRB2). Apart from uterus smooth muscle, the effect via BDKRB2 is stronger. Functionally, [Hyp3,Thr6]-bradykinyl-Val,Asp: Induces relaxation of rat smooth muscle from tail artery (EC(50)=3.5 nM) and contraction of that from ileum (EC(50)=223 nM), urinary bladder (EC(50)=1.5 uM) and uterus (EC(50)=356 nM). Binds to both bradykinin receptor B1 (BDKRB1) and B2 (BDKRB2); the effects via BDKRB2 are stronger. This chain is [Thr6]-bradykinyl-Val,Asp, found in Agalychnis dacnicolor (Giant Mexican leaf frog).